Here is a 146-residue protein sequence, read N- to C-terminus: Leghemoglobin 49 (146 aa).

Positions 2–146 constitute a Globin domain; it reads GFTQQQEALV…LATAIKKAMS (145 aa). Tyrosine 24 and tyrosine 29 each carry nitrated tyrosine. Residue serine 44 participates in heme b binding. Phosphoserine is present on serine 44. Histidine 61 contributes to the O2 binding site. Residues histidine 93 and lysine 96 each coordinate heme b. Tyrosine 134 is modified (nitrated tyrosine).

Belongs to the plant globin family. In terms of assembly, monomer. In terms of processing, nitrated in effective nodules and particularly in hypoxic conditions; this mechanism may play a protective role in the symbiosis by buffering toxic peroxynitrite NO(2)(-). Nitration level decrease during nodule senescence. Phosphorylation at Ser-44 disrupts the molecular environment of its porphyrin ring oxygen binding pocket, thus leading to a reduced oxygen consumption and to the delivery of oxygen O(2) to symbiosomes. Accumulates in root nodules after inoculation by bacteria of the genus Rhizobium.

It is found in the cytoplasm. It localises to the cytosol. Its subcellular location is the nucleus. Functionally, leghemoglobin that reversibly binds oxygen O(2) through a pentacoordinated heme iron. In root nodules, facilitates the diffusion of oxygen to the bacteroids while preventing the bacterial nitrogenase from being inactivated by buffering dioxygen, nitric oxide and carbon monoxide, and promoting the formation of reactive oxygen species (ROS, e.g. H(2)O(2)). This role is essential for symbiotic nitrogen fixation (SNF). This chain is Leghemoglobin 49, found in Vicia faba (Broad bean).